Consider the following 66-residue polypeptide: Large ribosomal subunit protein uL29 (66 aa).

Belongs to the universal ribosomal protein uL29 family.

In Mesorhizobium japonicum (strain LMG 29417 / CECT 9101 / MAFF 303099) (Mesorhizobium loti (strain MAFF 303099)), this protein is Large ribosomal subunit protein uL29.